We begin with the raw amino-acid sequence, 541 residues long: Pheromone B beta 1 receptor (541 aa).

The Extracellular segment spans residues 1–3; it reads MHP. Residues 4 to 24 traverse the membrane as a helical segment; the sequence is EFAPVAFLSAASLALPLPWHW. Over 25–33 the chain is Cytoplasmic; that stretch reads RAGNVATLS. A helical membrane pass occupies residues 34–54; the sequence is IIAWLFIMNMIYGINAVIWAG. Over 55 to 69 the chain is Extracellular; it reads SARITAVVYCDITTK. The chain crosses the membrane as a helical span at residues 70–90; the sequence is LTIGGNFALPAACLCLCIHLE. The Cytoplasmic portion of the chain corresponds to 91–109; sequence RVASVRAAQTTAADKRRRT. Residues 110–130 traverse the membrane as a helical segment; the sequence is IFELAMCWLLPIIFMALHYVV. Residues 131–150 lie on the Extracellular side of the membrane; it reads QGHRFDIVEDFGCRPATYYS. The chain crosses the membrane as a helical span at residues 151-171; sequence IPAIFIVWVPPLTMAAASLVY. Residues 172–205 are Cytoplasmic-facing; that stretch reads ASLAIRHFMHRRLSFAMHLQARSSALTTSRYLRL. Residues 206–226 traverse the membrane as a helical segment; sequence ILMAIVQLVWLVVTTAYTLWF. Residues 227-264 are Extracellular-facing; the sequence is SSMTLNLRPWTTWADVHSNFGRIQTWPAIITPAVILRG. Residues 265 to 285 form a helical membrane-spanning segment; that stretch reads ACTLWWMVPASTWIFVAFFAF. Topologically, residues 286-541 are cytoplasmic; sequence GNDAVEEYKR…IASVFPGGRR (256 aa). Disordered stretches follow at residues 364–393 and 414–541; these read TTST…PLDS and YTIE…GGRR. Residues 372 to 385 show a composition bias toward pro residues; it reads MPPPYSLPPPPPPQ. Residues 420–429 are compositionally biased toward low complexity; the sequence is PETPSTSSST. 2 stretches are compositionally biased toward pro residues: residues 467–478 and 493–502; these read IPAPPSLPPPTH and SRPPAFPPYP.

The protein belongs to the G-protein coupled receptor 4 family.

Its subcellular location is the membrane. Functionally, receptor for the BBP1 pheromone, a prenylated mating factor. This is Pheromone B beta 1 receptor (BBR1) from Schizophyllum commune (Split gill fungus).